Reading from the N-terminus, the 146-residue chain is Hemoglobin subunit beta (146 aa).

Valine 1 is modified (N-acetylvaline). The Globin domain maps to 2-146 (HLTPEEKVAV…VANALAHKYH (145 aa)). A Phosphothreonine modification is found at threonine 12. Serine 44 is subject to Phosphoserine. At lysine 59 the chain carries N6-acetyllysine. Histidine 63 is a heme b binding site. Lysine 82 bears the N6-acetyllysine mark. Position 92 (histidine 92) interacts with heme b. Cysteine 93 is modified (S-nitrosocysteine). Position 144 is an N6-acetyllysine (lysine 144).

The protein belongs to the globin family. As to quaternary structure, heterotetramer of two alpha chains and two beta chains. As to expression, red blood cells.

Involved in oxygen transport from the lung to the various peripheral tissues. This chain is Hemoglobin subunit beta (HBB), found in Cercocebus atys (Sooty mangabey).